Here is a 315-residue protein sequence, read N- to C-terminus: MKQDNQTGIKHKGEAKTARIPIKVVPLEEKLRKPEWIRAKLPTGQRFFEIKEILRNQKLHTVCEEASCPNIGECFSHGTATFMIMGDICTRRCPFCDVGHGRPNPLDPNEPQHLAESVAAMRLKYVVITSVDRDDLRDGGAQHFADCIQAIRASSPATRIEVLVPDFRGRLELALDILSATPPDVMNHNLETAPRLYKQARPGADYAHSLQLLKDYKTRNPDVTTKSGIMVGLGETDEEVLEVLADLRAHDVDMLTIGQYLQPSNGHLPVLRYVTPDQFKAFEKKAYDMGFRHAAVGAMVRSSYHADQQAREVIE.

[4Fe-4S] cluster is bound by residues C63, C68, C74, C89, C93, C96, and S303. The 218-residue stretch at 75 to 292 (FSHGTATFMI…EKKAYDMGFR (218 aa)) folds into the Radical SAM core domain.

The protein belongs to the radical SAM superfamily. Lipoyl synthase family. [4Fe-4S] cluster serves as cofactor.

It is found in the cytoplasm. The enzyme catalyses [[Fe-S] cluster scaffold protein carrying a second [4Fe-4S](2+) cluster] + N(6)-octanoyl-L-lysyl-[protein] + 2 oxidized [2Fe-2S]-[ferredoxin] + 2 S-adenosyl-L-methionine + 4 H(+) = [[Fe-S] cluster scaffold protein] + N(6)-[(R)-dihydrolipoyl]-L-lysyl-[protein] + 4 Fe(3+) + 2 hydrogen sulfide + 2 5'-deoxyadenosine + 2 L-methionine + 2 reduced [2Fe-2S]-[ferredoxin]. The protein operates within protein modification; protein lipoylation via endogenous pathway; protein N(6)-(lipoyl)lysine from octanoyl-[acyl-carrier-protein]: step 2/2. In terms of biological role, catalyzes the radical-mediated insertion of two sulfur atoms into the C-6 and C-8 positions of the octanoyl moiety bound to the lipoyl domains of lipoate-dependent enzymes, thereby converting the octanoylated domains into lipoylated derivatives. The polypeptide is Lipoyl synthase (Laribacter hongkongensis (strain HLHK9)).